A 366-amino-acid chain; its full sequence is Terpene cyclase atmA (366 aa).

A run of 8 helical transmembrane segments spans residues 9-29, 84-104, 113-133, 162-182, 195-215, 233-253, 291-311, and 333-353; these read FLLL…NNGF, LTGL…VVHI, GMVI…GIVI, GLVV…SLPA, IAAW…HHLF, VYHF…SAFV, AGLF…TMVW, and ILRL…VRLI.

The protein belongs to the membrane-bound ascI terpene cyclase family.

It is found in the membrane. In terms of biological role, aflatrem synthesis protein A; part of the ATM2 gene cluster that mediates the biosynthesis of aflatrem, a tremorgenic mycotoxin with acute neurotoxic effects. Synthesis of geranylgeranyl diphosphate (GGPP) by AtmG (a GGPP synthase) precedes condensation of GGPP with indole 3-glycerol phosphate, followed by epoxidation and cyclization by AtmM (a FAD-dependent monooxygenase) and AtmC (a prenyltransferase) to produce paspaline. AtmB is also essential for paspaline production, but its exact role has not been identified yet. AtmP, a cytochrome P450 monooxygenase, subsequently converts paspaline to 13-desoxypaxilline via PC-M6 by removal of the C-30 methyl group and oxidation at C-10. AtmQ, a cytochrome P450 monooxygenase, then catalyzes the oxidation of 13-desoxypaxilline, first at C-7 to produce paspalicine and then at C-13 to form paspalinine. Finally, AtmD prenylates paspalinine to form aflatrem. The role of atmA in the aflatrem biosynthesis is still unknown. The chain is Terpene cyclase atmA from Aspergillus flavus.